A 225-amino-acid chain; its full sequence is Heptaprenylglyceryl phosphate synthase (225 aa).

Lysine 6 lines the sn-glycerol 1-phosphate pocket. Positions 8 and 34 each coordinate Mg(2+). Residues 153–158, glycine 183, and 203–204 contribute to the sn-glycerol 1-phosphate site; these read YVEYSG and GN.

This sequence belongs to the GGGP/HepGP synthase family. Group I subfamily. Homodimer. It depends on Mg(2+) as a cofactor.

It catalyses the reaction sn-glycerol 1-phosphate + all-trans-heptaprenyl diphosphate = 3-heptaprenyl-sn-glycero-1-phosphate + diphosphate. Its pathway is membrane lipid metabolism; glycerophospholipid metabolism. Functionally, prenyltransferase that catalyzes in vivo the transfer of the heptaprenyl moiety of heptaprenyl pyrophosphate (HepPP; 35 carbon atoms) to the C3 hydroxyl of sn-glycerol-1-phosphate (G1P), producing heptaprenylglyceryl phosphate (HepGP). This reaction is an ether-bond-formation step in the biosynthesis of archaea-type G1P-based membrane lipids found in Bacillales. This is Heptaprenylglyceryl phosphate synthase from Listeria monocytogenes serotype 4a (strain HCC23).